The chain runs to 86 residues: Large ribosomal subunit protein bL31B (86 aa).

Belongs to the bacterial ribosomal protein bL31 family. Type B subfamily. Part of the 50S ribosomal subunit.

The polypeptide is Large ribosomal subunit protein bL31B (Cupriavidus necator (strain ATCC 17699 / DSM 428 / KCTC 22496 / NCIMB 10442 / H16 / Stanier 337) (Ralstonia eutropha)).